The sequence spans 269 residues: MSDLPGIVVTGASGRMGQMLMKTVLASGKARLVGAVERPGSDWVGRDAGAAMGGAAIGVTVTDDPLAAFAQAQAVIDFTAPEATVQFAELAAQARAVHVIGTTGLEPVHLERLAWAAHHAVIVRAGNMSLGVNLLTRLTQKVAEALDEDWDIEVVEAHHRMKVDAPSGTALMLGEAAARGRGVDLAQARVSGRDGITGPRAPGSIGFSAIRGGDIVGEHDVIFAAAGERITLRHVATDRAIFARGALKAALWGQDKRPGQYDMMDVLGL.

NAD(+) is bound by residues 11-16 (GASGRM) and E37. R38 contacts NADP(+). NAD(+) is bound by residues 101-103 (GTT) and 125-128 (AGNM). H158 (proton donor/acceptor) is an active-site residue. H159 is a binding site for (S)-2,3,4,5-tetrahydrodipicolinate. K162 acts as the Proton donor in catalysis. 168 to 169 (GT) contacts (S)-2,3,4,5-tetrahydrodipicolinate.

The protein belongs to the DapB family.

It is found in the cytoplasm. It catalyses the reaction (S)-2,3,4,5-tetrahydrodipicolinate + NAD(+) + H2O = (2S,4S)-4-hydroxy-2,3,4,5-tetrahydrodipicolinate + NADH + H(+). The enzyme catalyses (S)-2,3,4,5-tetrahydrodipicolinate + NADP(+) + H2O = (2S,4S)-4-hydroxy-2,3,4,5-tetrahydrodipicolinate + NADPH + H(+). It participates in amino-acid biosynthesis; L-lysine biosynthesis via DAP pathway; (S)-tetrahydrodipicolinate from L-aspartate: step 4/4. Catalyzes the conversion of 4-hydroxy-tetrahydrodipicolinate (HTPA) to tetrahydrodipicolinate. This Cereibacter sphaeroides (strain ATCC 17029 / ATH 2.4.9) (Rhodobacter sphaeroides) protein is 4-hydroxy-tetrahydrodipicolinate reductase.